The sequence spans 310 residues: Glutaminase (310 aa).

Substrate contacts are provided by Ser-66, Asn-117, Glu-161, Asn-168, Tyr-192, Tyr-244, and Val-262.

It belongs to the glutaminase family. In terms of assembly, homotetramer.

The enzyme catalyses L-glutamine + H2O = L-glutamate + NH4(+). This is Glutaminase from Desulfovibrio desulfuricans (strain ATCC 27774 / DSM 6949 / MB).